We begin with the raw amino-acid sequence, 113 residues long: MSLRYYIKNILFGLYCALIYIYLITKNNEGYYFLASDKMLYAIVISTILCPYSKYAIEHIFFKFIKKDFFRKRKNLNKCPRGKIKPYLCVYNLLCLVLAIPFGLLGLVYINKE.

Its function is as follows. This protein is able to protect a cell, which harbors the plasmid pKY-1 encoding colicin E1*, against colicin E1*. The sequence is that of Colicin-E1* immunity protein (imm) from Shigella sonnei.